The following is a 901-amino-acid chain: Protein translocase subunit SecA (901 aa).

ATP contacts are provided by residues Gln-87, 105–109 (GEGKT), and Asp-512. The interval 859–901 (HQDDDSAAAAALAAQTGERKVGRNDPCPCGSGKKYKQCHGRLQ) is disordered. Zn(2+)-binding residues include Cys-885, Cys-887, Cys-896, and His-897. Basic residues predominate over residues 891-901 (KKYKQCHGRLQ).

The protein belongs to the SecA family. Monomer and homodimer. Part of the essential Sec protein translocation apparatus which comprises SecA, SecYEG and auxiliary proteins SecDF-YajC and YidC. The cofactor is Zn(2+).

It localises to the cell inner membrane. Its subcellular location is the cytoplasm. The enzyme catalyses ATP + H2O + cellular proteinSide 1 = ADP + phosphate + cellular proteinSide 2.. Part of the Sec protein translocase complex. Interacts with the SecYEG preprotein conducting channel. Has a central role in coupling the hydrolysis of ATP to the transfer of proteins into and across the cell membrane, serving both as a receptor for the preprotein-SecB complex and as an ATP-driven molecular motor driving the stepwise translocation of polypeptide chains across the membrane. In Escherichia coli O9:H4 (strain HS), this protein is Protein translocase subunit SecA.